The chain runs to 321 residues: tRNA dimethylallyltransferase (321 aa).

24-31 contributes to the ATP binding site; the sequence is GPTASGKS. 26–31 contributes to the substrate binding site; the sequence is TASGKS. Interaction with substrate tRNA stretches follow at residues 49 to 52 and 172 to 176; these read DSMQ and QRIVR.

This sequence belongs to the IPP transferase family. As to quaternary structure, monomer. It depends on Mg(2+) as a cofactor.

It carries out the reaction adenosine(37) in tRNA + dimethylallyl diphosphate = N(6)-dimethylallyladenosine(37) in tRNA + diphosphate. Catalyzes the transfer of a dimethylallyl group onto the adenine at position 37 in tRNAs that read codons beginning with uridine, leading to the formation of N6-(dimethylallyl)adenosine (i(6)A). In Mesorhizobium japonicum (strain LMG 29417 / CECT 9101 / MAFF 303099) (Mesorhizobium loti (strain MAFF 303099)), this protein is tRNA dimethylallyltransferase.